The following is a 267-amino-acid chain: Formamidopyrimidine-DNA glycosylase (267 aa).

The Schiff-base intermediate with DNA role is filled by proline 2. Residue glutamate 3 is the Proton donor of the active site. Lysine 58 functions as the Proton donor; for beta-elimination activity in the catalytic mechanism. 3 residues coordinate DNA: histidine 91, arginine 110, and arginine 152. The segment at aspartate 233 to threonine 267 adopts an FPG-type zinc-finger fold. The Proton donor; for delta-elimination activity role is filled by arginine 257.

This sequence belongs to the FPG family. Monomer. Requires Zn(2+) as cofactor.

The catalysed reaction is Hydrolysis of DNA containing ring-opened 7-methylguanine residues, releasing 2,6-diamino-4-hydroxy-5-(N-methyl)formamidopyrimidine.. The enzyme catalyses 2'-deoxyribonucleotide-(2'-deoxyribose 5'-phosphate)-2'-deoxyribonucleotide-DNA = a 3'-end 2'-deoxyribonucleotide-(2,3-dehydro-2,3-deoxyribose 5'-phosphate)-DNA + a 5'-end 5'-phospho-2'-deoxyribonucleoside-DNA + H(+). Its function is as follows. Involved in base excision repair of DNA damaged by oxidation or by mutagenic agents. Acts as a DNA glycosylase that recognizes and removes damaged bases. Has a preference for oxidized purines, such as 7,8-dihydro-8-oxoguanine (8-oxoG). Has AP (apurinic/apyrimidinic) lyase activity and introduces nicks in the DNA strand. Cleaves the DNA backbone by beta-delta elimination to generate a single-strand break at the site of the removed base with both 3'- and 5'-phosphates. The polypeptide is Formamidopyrimidine-DNA glycosylase (Geobacter metallireducens (strain ATCC 53774 / DSM 7210 / GS-15)).